The primary structure comprises 395 residues: Tyrosine--tRNA ligase (395 aa).

The 'HIGH' region motif lies at 42 to 51; it reads PTAPDIHLGH. The 'KMSKS' region motif lies at 226–230; it reads KMSKS. K229 lines the ATP pocket. Positions 334 to 394 constitute an S4 RNA-binding domain; sequence IAISNLLKDA…GKRKFARITL (61 aa).

Belongs to the class-I aminoacyl-tRNA synthetase family. TyrS type 2 subfamily. As to quaternary structure, homodimer.

The protein localises to the cytoplasm. The catalysed reaction is tRNA(Tyr) + L-tyrosine + ATP = L-tyrosyl-tRNA(Tyr) + AMP + diphosphate + H(+). Catalyzes the attachment of tyrosine to tRNA(Tyr) in a two-step reaction: tyrosine is first activated by ATP to form Tyr-AMP and then transferred to the acceptor end of tRNA(Tyr). This Photobacterium profundum (strain SS9) protein is Tyrosine--tRNA ligase.